A 313-amino-acid polypeptide reads, in one-letter code: uncharacterized protein (313 aa).

9 helical membrane-spanning segments follow: residues 31–53 (AWGI…GWLF), 62–84 (LFLF…WNPY), 104–126 (VFFW…IYTS), 147–161 (FALL…NQSV), 166–185 (SMFW…SFLL), 198–220 (RVLK…ALRF), 225–244 (SFSG…YLII), 264–282 (FFAA…TSSF), and 286–308 (PAAM…SILI).

Its subcellular location is the cell membrane. This is an uncharacterized protein from Archaeoglobus fulgidus (strain ATCC 49558 / DSM 4304 / JCM 9628 / NBRC 100126 / VC-16).